An 85-amino-acid chain; its full sequence is Translation initiation factor IF-1 (85 aa).

Residues 1–72 enclose the S1-like domain; that stretch reads MAKEELLEMR…TKARITYRFM (72 aa).

Belongs to the IF-1 family. Component of the 30S ribosomal translation pre-initiation complex which assembles on the 30S ribosome in the order IF-2 and IF-3, IF-1 and N-formylmethionyl-tRNA(fMet); mRNA recruitment can occur at any time during PIC assembly.

It is found in the cytoplasm. One of the essential components for the initiation of protein synthesis. Stabilizes the binding of IF-2 and IF-3 on the 30S subunit to which N-formylmethionyl-tRNA(fMet) subsequently binds. Helps modulate mRNA selection, yielding the 30S pre-initiation complex (PIC). Upon addition of the 50S ribosomal subunit IF-1, IF-2 and IF-3 are released leaving the mature 70S translation initiation complex. The sequence is that of Translation initiation factor IF-1 from Erythrobacter litoralis (strain HTCC2594).